The sequence spans 897 residues: Coiled-coil domain-containing protein lobo (897 aa).

The interval 27–49 is disordered; the sequence is EIDEQRRSQGSESDFADEMEGEF. The span at 40–49 shows a compositional bias: acidic residues; the sequence is DFADEMEGEF. 2 coiled-coil regions span residues 269–306 and 801–858; these read DLKS…DLEL and SLLN…QRLT.

This sequence belongs to the DRC7 family. Testis-specific (at protein level).

The protein resides in the cell projection. The protein localises to the cilium. Its subcellular location is the flagellum. It localises to the cytoplasm. It is found in the cytoskeleton. The protein resides in the cilium axoneme. Its function is as follows. Key component of the nexin-dynein regulatory complex (N-DRC), essential for N-DRC integrity. Involved in the regulation of flagellar motility. Involved in sperm motility. Required for the sperm to enter in the coiled storage seminal receptacle (SR) tubule. This chain is Coiled-coil domain-containing protein lobo (lobo), found in Drosophila melanogaster (Fruit fly).